Here is a 208-residue protein sequence, read N- to C-terminus: Putative thymidylate kinase (208 aa).

Positions 8–15 (GIDGSGVS) are defective ATP-binding.

The protein belongs to the thymidylate kinase family.

The catalysed reaction is dTMP + ATP = dTDP + ADP. This chain is Putative thymidylate kinase (tmk), found in Aeropyrum pernix (strain ATCC 700893 / DSM 11879 / JCM 9820 / NBRC 100138 / K1).